Here is a 296-residue protein sequence, read N- to C-terminus: 4-diphosphocytidyl-2-C-methyl-D-erythritol kinase (296 aa).

Lys18 is an active-site residue. 102 to 112 (PMGGGIGGGSS) is an ATP binding site. Asp144 is an active-site residue.

The protein belongs to the GHMP kinase family. IspE subfamily.

It catalyses the reaction 4-CDP-2-C-methyl-D-erythritol + ATP = 4-CDP-2-C-methyl-D-erythritol 2-phosphate + ADP + H(+). The protein operates within isoprenoid biosynthesis; isopentenyl diphosphate biosynthesis via DXP pathway; isopentenyl diphosphate from 1-deoxy-D-xylulose 5-phosphate: step 3/6. Functionally, catalyzes the phosphorylation of the position 2 hydroxy group of 4-diphosphocytidyl-2C-methyl-D-erythritol. This is 4-diphosphocytidyl-2-C-methyl-D-erythritol kinase from Vibrio atlanticus (strain LGP32) (Vibrio splendidus (strain Mel32)).